The primary structure comprises 266 residues: MFTLADHTFSSRLLTGTGKFTNSHTMLASIVASESQIVTLAMKRIDLKLGQDDILTPLLAQGLTLLPNTSGARNAKEAIFAAELARDLLDTHWLKLEIHPDPKYLMPDPIETLLAAEKLCQMGFKVLPYVHADPVLCRRLEEVGCAAVMPLASPIGSNQGLATEAFLKIIIEQAKVPVIVDAGLGAPSQACRAMEMGADAVLVNTAIASSRSPIIMAKCFADAVKAGREAYLAGLGQVQPHASHTSPLTGFLQQMPAENTNTVEPL.

The Schiff-base intermediate with DXP role is filled by K95. Residues G156, 182-183, and 204-205 each bind 1-deoxy-D-xylulose 5-phosphate; these read AG and NT.

It belongs to the ThiG family. Homotetramer. Forms heterodimers with either ThiH or ThiS.

It localises to the cytoplasm. It carries out the reaction [ThiS sulfur-carrier protein]-C-terminal-Gly-aminoethanethioate + 2-iminoacetate + 1-deoxy-D-xylulose 5-phosphate = [ThiS sulfur-carrier protein]-C-terminal Gly-Gly + 2-[(2R,5Z)-2-carboxy-4-methylthiazol-5(2H)-ylidene]ethyl phosphate + 2 H2O + H(+). It functions in the pathway cofactor biosynthesis; thiamine diphosphate biosynthesis. In terms of biological role, catalyzes the rearrangement of 1-deoxy-D-xylulose 5-phosphate (DXP) to produce the thiazole phosphate moiety of thiamine. Sulfur is provided by the thiocarboxylate moiety of the carrier protein ThiS. In vitro, sulfur can be provided by H(2)S. In Shewanella denitrificans (strain OS217 / ATCC BAA-1090 / DSM 15013), this protein is Thiazole synthase.